A 723-amino-acid polypeptide reads, in one-letter code: Transmembrane channel-like protein 7 (723 aa).

The segment at 1-21 is disordered; it reads MSESSASALQLGRPSRQPAVH. The Extracellular portion of the chain corresponds to 1 to 168; the sequence is MSESSASALQ…GIQSYFSFLR (168 aa). The N-linked (GlcNAc...) asparagine glycan is linked to Asn24. Residues 51–70 form a disordered region; the sequence is RRRTTVHSRDKQSGTLLKST. Asn84 carries N-linked (GlcNAc...) asparagine glycosylation. The residue at position 89 (Ser89) is a Phosphoserine. Asn96 carries an N-linked (GlcNAc...) asparagine glycan. Residues 169-189 traverse the membrane as a helical segment; the sequence is FLVLLNLVIFLIIFMLVLLPI. The Cytoplasmic segment spans residues 190-219; sequence LLTKYKITNSSFVLIPFKDTDIQCTVYPVS. Residues 220–240 traverse the membrane as a helical segment; that stretch reads SSGLIYFYSYIIDLLSGTGFL. Over 241 to 263 the chain is Extracellular; sequence EETSLFYGHYTIDGVKFQNFTYD. Asn259 is a glycosylation site (N-linked (GlcNAc...) asparagine). The helical transmembrane segment at 264-284 threads the bilayer; sequence LPLAYLISTIAYLALSLLWIV. The Cytoplasmic portion of the chain corresponds to 285-362; it reads KRSVEGFKIN…EETIRIYSLR (78 aa). Residues 363–383 form a helical membrane-spanning segment; that stretch reads LFLNCIVLAVLGACFYAIYVA. Topologically, residues 384–404 are extracellular; the sequence is TVFSQEHMKKEIDKMVFGENL. Residues 405–425 traverse the membrane as a helical segment; it reads LILYLPSIVITLANFITPMIF. The Cytoplasmic portion of the chain corresponds to 426–494; sequence AKIIRYEDYS…PCWETQVGQE (69 aa). The chain crosses the membrane as a helical span at residues 495–515; that stretch reads MYKLMIFDFIIILAVTLFVDF. The Extracellular portion of the chain corresponds to 516–555; sequence PRKLLVTYCSSWKLIQCWGQQEFAIPDNVLGIVYGQTICW. A helical transmembrane segment spans residues 556–576; the sequence is IGAFFSPLLPAIATLKFIIIF. The Cytoplasmic portion of the chain corresponds to 577 to 601; it reads YVKEWSLLYTCRPSPRPFRASNSNF. Residues 602-622 traverse the membrane as a helical segment; the sequence is FFLLVLLIGLCLAIIPLTISI. Residues 623 to 665 lie on the Extracellular side of the membrane; it reads SRIPSSKACGPFTNFNTTWEVIPKTVSTFPSSLQSFIHGVTSE. A glycan (N-linked (GlcNAc...) asparagine) is linked at Asn638. Residues 666–686 form a helical membrane-spanning segment; the sequence is AFAVPFFMIICLIMFYFIALA. Over 687–723 the chain is Cytoplasmic; it reads GAHKRVVIQLREQLSLESRDKRYLIQKLTEAQRDTRN.

Belongs to the TMC family. In terms of assembly, interacts with PIEZO2; the interaction inhibits PIEZO2-conducted mechanically activated currents.

It is found in the membrane. Functionally, acts as an inhibitory modulator of PIEZO2 mechanosensitive channel in dorsal root ganglion (DRG) neurons through physical interactions or interference with the interaction between Piezo2 and the cytoskeleton. The protein is Transmembrane channel-like protein 7 (TMC7) of Macaca fascicularis (Crab-eating macaque).